Reading from the N-terminus, the 626-residue chain is Bifurcating [FeFe] hydrogenase beta subunit (626 aa).

198–201 (GGGG) contributes to the NAD(+) binding site. Residues lysine 207 and 224–228 (NGDEG) each bind FMN. Aspartate 229 provides a ligand contact to NAD(+). FMN-binding positions include 312–317 (FVCGEE) and 350–352 (INN). Cysteine 485, cysteine 488, cysteine 491, cysteine 531, cysteine 578, cysteine 581, cysteine 584, cysteine 588, cysteine 608, cysteine 611, cysteine 614, and cysteine 618 together coordinate [4Fe-4S] cluster. 2 consecutive 4Fe-4S ferredoxin-type domains span residues 569–598 (KKYV…GERG) and 599–626 (KPYT…IELV).

It belongs to the complex I 51 kDa subunit family. In terms of assembly, heterotrimer composed of HydA (alpha subunit), HydB (beta subunit) and HydC (gamma subunit). Near neutral and acidic pH conditions favor oligomerization of the heterotrimeric holoenzyme. It depends on [2Fe-2S] cluster as a cofactor. The cofactor is [4Fe-4S] cluster. FMN serves as cofactor.

Its subcellular location is the cytoplasm. The catalysed reaction is 2 H2 + 2 oxidized [2Fe-2S]-[ferredoxin] + NAD(+) = 2 reduced [2Fe-2S]-[ferredoxin] + NADH + 3 H(+). Catalyzes the oxidation of the physiological electron carriers NADH and reduced ferredoxin, coupled to the production of H(2). Acts as a bifurcating [FeFe] hydrogenase, which uses the exergonic oxidation of reduced ferredoxin to drive the unfavorable oxidation of NADH to produce H(2). The beta subunit contains flavin- and NAD-binding sites and is potentially the site for NADH oxidation, with the subsequent shuttling of electrons to the alpha subunit. The sequence is that of Bifurcating [FeFe] hydrogenase beta subunit from Thermotoga maritima (strain ATCC 43589 / DSM 3109 / JCM 10099 / NBRC 100826 / MSB8).